The sequence spans 631 residues: uncharacterized protein (631 aa).

Polar residues predominate over residues 1 to 19 (MSKMGSSSMGELQDGITQE). The interval 1–92 (MSKMGSSSMG…EENYPRLQTT (92 aa)) is disordered. Basic residues predominate over residues 67-76 (KKKKKKKLKK). In terms of domain architecture, Exonuclease spans 277-426 (LAIDCEMVRT…EDALACVDLL (150 aa)). The span at 517–526 (ANRNTKQENN) shows a compositional bias: polar residues. Positions 517–540 (ANRNTKQENNSDTDTENDSVEEDQ) are disordered. A compositionally biased stretch (acidic residues) spans 527 to 540 (SDTDTENDSVEEDQ).

Belongs to the REXO1/REXO3 family.

It localises to the nucleus. This is an uncharacterized protein from Schizosaccharomyces pombe (strain 972 / ATCC 24843) (Fission yeast).